The sequence spans 419 residues: UDP-N-acetylglucosamine 1-carboxyvinyltransferase 2 (419 aa).

A phosphoenolpyruvate-binding site is contributed by 22–23 (KN). Arginine 92 serves as a coordination point for UDP-N-acetyl-alpha-D-glucosamine. Residue cysteine 116 is the Proton donor of the active site. Cysteine 116 carries the 2-(S-cysteinyl)pyruvic acid O-phosphothioketal modification. UDP-N-acetyl-alpha-D-glucosamine is bound by residues 121-125 (RPIDL), aspartate 306, and isoleucine 328.

The protein belongs to the EPSP synthase family. MurA subfamily.

It is found in the cytoplasm. The catalysed reaction is phosphoenolpyruvate + UDP-N-acetyl-alpha-D-glucosamine = UDP-N-acetyl-3-O-(1-carboxyvinyl)-alpha-D-glucosamine + phosphate. The protein operates within cell wall biogenesis; peptidoglycan biosynthesis. Its function is as follows. Cell wall formation. Adds enolpyruvyl to UDP-N-acetylglucosamine. This is UDP-N-acetylglucosamine 1-carboxyvinyltransferase 2 from Streptococcus pyogenes serotype M3 (strain ATCC BAA-595 / MGAS315).